The primary structure comprises 367 residues: Glutamate 5-kinase (367 aa).

Lys10 contacts ATP. Substrate is bound by residues Ser50, Asp137, and Asn149. ATP-binding positions include 169–170 (TD) and 211–217 (TGGMGTK). Residues 275-353 (AGEITVDDGA…QEISEILGYE (79 aa)) enclose the PUA domain.

This sequence belongs to the glutamate 5-kinase family.

It localises to the cytoplasm. The catalysed reaction is L-glutamate + ATP = L-glutamyl 5-phosphate + ADP. It participates in amino-acid biosynthesis; L-proline biosynthesis; L-glutamate 5-semialdehyde from L-glutamate: step 1/2. With respect to regulation, proline-mediated feedback inhibition. Functionally, catalyzes the transfer of a phosphate group to glutamate to form L-glutamate 5-phosphate. The sequence is that of Glutamate 5-kinase from Serratia marcescens.